A 361-amino-acid chain; its full sequence is Chorismate synthase (361 aa).

Residue Arg-47 coordinates NADP(+). FMN contacts are provided by residues 124 to 126 (RAS), Gly-286, 301 to 305 (KPTAT), and Arg-327.

Belongs to the chorismate synthase family. Homotetramer. FMNH2 serves as cofactor.

The enzyme catalyses 5-O-(1-carboxyvinyl)-3-phosphoshikimate = chorismate + phosphate. It functions in the pathway metabolic intermediate biosynthesis; chorismate biosynthesis; chorismate from D-erythrose 4-phosphate and phosphoenolpyruvate: step 7/7. Functionally, catalyzes the anti-1,4-elimination of the C-3 phosphate and the C-6 proR hydrogen from 5-enolpyruvylshikimate-3-phosphate (EPSP) to yield chorismate, which is the branch point compound that serves as the starting substrate for the three terminal pathways of aromatic amino acid biosynthesis. This reaction introduces a second double bond into the aromatic ring system. In Akkermansia muciniphila (strain ATCC BAA-835 / DSM 22959 / JCM 33894 / BCRC 81048 / CCUG 64013 / CIP 107961 / Muc), this protein is Chorismate synthase.